A 513-amino-acid polypeptide reads, in one-letter code: Secreted LysM effector Vd6LysM (513 aa).

Residues 1–19 (MSFIKSLLLAAAAVASVSA) form the signal peptide. 4 LysM domains span residues 38–85 (SYWV…SYCV), 136–182 (KFHW…NVCV), 219–265 (KFHW…QVCV), and 302–348 (KFHW…QVCV). The span at 357 to 367 (TTTRPPTTTAP) shows a compositional bias: low complexity. The segment at 357-377 (TTTRPPTTTAPGNGVSTPQPT) is disordered. LysM domains follow at residues 387-433 (KFHW…NVCV) and 465-511 (KFHW…NVCV).

The protein belongs to the secreted LysM effector family.

In terms of biological role, might have a role in sequestration of chitin oligosaccharides (breakdown products of fungal cell walls that are released during invasion and act as triggers of host immunity) to dampen host defense. Does not play an important role during host colonization. The sequence is that of Secreted LysM effector Vd6LysM from Verticillium dahliae (strain VdLs.17 / ATCC MYA-4575 / FGSC 10137) (Verticillium wilt).